The following is a 202-amino-acid chain: Small ribosomal subunit protein uS4 (202 aa).

Positions 23-42 (RKNARRAYAPGQHGQARKKR) are disordered. Residues 90-153 (MRLDNTVFRL…RSQDLVKRNM (64 aa)) form the S4 RNA-binding domain.

Belongs to the universal ribosomal protein uS4 family. As to quaternary structure, part of the 30S ribosomal subunit. Contacts protein S5. The interaction surface between S4 and S5 is involved in control of translational fidelity.

Its function is as follows. One of the primary rRNA binding proteins, it binds directly to 16S rRNA where it nucleates assembly of the body of the 30S subunit. With S5 and S12 plays an important role in translational accuracy. The sequence is that of Small ribosomal subunit protein uS4 from Microcystis aeruginosa (strain NIES-843 / IAM M-2473).